The chain runs to 247 residues: Cytochrome c oxidase subunit 2 (247 aa).

Residues 12 to 38 (DVPTPWGLYFQDSSTPNQEGIIELHDN) lie on the Mitochondrial intermembrane side of the membrane. A helical transmembrane segment spans residues 39–59 (IMFYLVLILCTVSWLLFSIVK). The Mitochondrial matrix portion of the chain corresponds to 60 to 78 (DSSKNPLPHKYLVHGQTIE). A helical membrane pass occupies residues 79–101 (IIWTILPAVVLLIIAFPSFILLY). The Mitochondrial intermembrane segment spans residues 102 to 247 (LCDEVISPAM…KEFLTWLNEQ (146 aa)). Residues histidine 182, cysteine 217, glutamate 219, cysteine 221, histidine 225, and methionine 228 each contribute to the Cu cation site. Residue glutamate 219 coordinates Mg(2+).

This sequence belongs to the cytochrome c oxidase subunit 2 family. In terms of assembly, component of the cytochrome c oxidase (complex IV, CIV), a multisubunit enzyme composed of a catalytic core of 3 subunits and several supernumerary subunits. The complex exists as a monomer or a dimer and forms supercomplexes (SCs) in the inner mitochondrial membrane with ubiquinol-cytochrome c oxidoreductase (cytochrome b-c1 complex, complex III, CIII). Requires Cu cation as cofactor. The signal sequence of COX2 is processed by IMP1.

The protein localises to the mitochondrion inner membrane. It catalyses the reaction 4 Fe(II)-[cytochrome c] + O2 + 8 H(+)(in) = 4 Fe(III)-[cytochrome c] + 2 H2O + 4 H(+)(out). In terms of biological role, component of the cytochrome c oxidase, the last enzyme in the mitochondrial electron transport chain which drives oxidative phosphorylation. The respiratory chain contains 3 multisubunit complexes succinate dehydrogenase (complex II, CII), ubiquinol-cytochrome c oxidoreductase (cytochrome b-c1 complex, complex III, CIII) and cytochrome c oxidase (complex IV, CIV), that cooperate to transfer electrons derived from NADH and succinate to molecular oxygen, creating an electrochemical gradient over the inner membrane that drives transmembrane transport and the ATP synthase. Cytochrome c oxidase is the component of the respiratory chain that catalyzes the reduction of oxygen to water. Electrons originating from reduced cytochrome c in the intermembrane space (IMS) are transferred via the dinuclear copper A center (CU(A)) of subunit 2 and heme A of subunit 1 to the active site in subunit 1, a binuclear center (BNC) formed by heme A3 and copper B (CU(B)). The BNC reduces molecular oxygen to 2 water molecules using 4 electrons from cytochrome c in the IMS and 4 protons from the mitochondrial matrix. The sequence is that of Cytochrome c oxidase subunit 2 (COX2) from Cyberlindnera mrakii (Yeast).